The sequence spans 64 residues: SPbeta prophage-derived uncharacterized protein YopV (64 aa).

The polypeptide is SPbeta prophage-derived uncharacterized protein YopV (yopV) (Bacillus subtilis (strain 168)).